Here is a 396-residue protein sequence, read N- to C-terminus: Elongation factor Tu (396 aa).

Residues Lys-10–Val-205 enclose the tr-type G domain. Positions Gly-19–Thr-26 are G1. GTP is bound at residue Gly-19–Thr-26. Thr-26 serves as a coordination point for Mg(2+). The segment at Gly-62–Asn-66 is G2. Residues Asp-83 to Gly-86 form a G3 region. GTP-binding positions include Asp-83–His-87 and Asn-138–Asp-141. The interval Asn-138–Asp-141 is G4. The tract at residues Ser-175–Leu-177 is G5.

Belongs to the TRAFAC class translation factor GTPase superfamily. Classic translation factor GTPase family. EF-Tu/EF-1A subfamily. As to quaternary structure, monomer.

It localises to the cytoplasm. The enzyme catalyses GTP + H2O = GDP + phosphate + H(+). Its function is as follows. GTP hydrolase that promotes the GTP-dependent binding of aminoacyl-tRNA to the A-site of ribosomes during protein biosynthesis. This chain is Elongation factor Tu, found in Mycobacterium sp. (strain JLS).